The primary structure comprises 250 residues: Triosephosphate isomerase (250 aa).

Residue 9–11 (NWK) coordinates substrate. The Electrophile role is filled by His95. Glu167 acts as the Proton acceptor in catalysis. Residues Gly173, Ser213, and 234–235 (GG) each bind substrate.

It belongs to the triosephosphate isomerase family. In terms of assembly, homodimer.

It localises to the cytoplasm. It catalyses the reaction D-glyceraldehyde 3-phosphate = dihydroxyacetone phosphate. It participates in carbohydrate biosynthesis; gluconeogenesis. The protein operates within carbohydrate degradation; glycolysis; D-glyceraldehyde 3-phosphate from glycerone phosphate: step 1/1. In terms of biological role, involved in the gluconeogenesis. Catalyzes stereospecifically the conversion of dihydroxyacetone phosphate (DHAP) to D-glyceraldehyde-3-phosphate (G3P). This chain is Triosephosphate isomerase, found in Chloroflexus aurantiacus (strain ATCC 29366 / DSM 635 / J-10-fl).